We begin with the raw amino-acid sequence, 331 residues long: 6-phosphogluconolactonase (331 aa).

The protein belongs to the cycloisomerase 2 family.

It carries out the reaction 6-phospho-D-glucono-1,5-lactone + H2O = 6-phospho-D-gluconate + H(+). It functions in the pathway carbohydrate degradation; pentose phosphate pathway; D-ribulose 5-phosphate from D-glucose 6-phosphate (oxidative stage): step 2/3. In terms of biological role, catalyzes the hydrolysis of 6-phosphogluconolactone to 6-phosphogluconate. This is 6-phosphogluconolactonase from Buchnera aphidicola subsp. Baizongia pistaciae (strain Bp).